A 200-amino-acid chain; its full sequence is Cytochrome c biogenesis ATP-binding export protein CcmA (200 aa).

The ABC transporter domain occupies 1 to 200 (MRLSGNGLRC…ARELRIGGAA (200 aa)). An ATP-binding site is contributed by 35 to 42 (GPNGAGKT).

This sequence belongs to the ABC transporter superfamily. CcmA exporter (TC 3.A.1.107) family. In terms of assembly, the complex is composed of two ATP-binding proteins (CcmA) and two transmembrane proteins (CcmB).

It is found in the cell inner membrane. The catalysed reaction is heme b(in) + ATP + H2O = heme b(out) + ADP + phosphate + H(+). Part of the ABC transporter complex CcmAB involved in the biogenesis of c-type cytochromes; once thought to export heme, this seems not to be the case, but its exact role is uncertain. Responsible for energy coupling to the transport system. This is Cytochrome c biogenesis ATP-binding export protein CcmA from Nitrobacter winogradskyi (strain ATCC 25391 / DSM 10237 / CIP 104748 / NCIMB 11846 / Nb-255).